Here is a 257-residue protein sequence, read N- to C-terminus: Probable septum site-determining protein MinC (257 aa).

It belongs to the MinC family. In terms of assembly, interacts with MinD and FtsZ.

Its function is as follows. Cell division inhibitor that blocks the formation of polar Z ring septums. Rapidly oscillates between the poles of the cell to destabilize FtsZ filaments that have formed before they mature into polar Z rings. Prevents FtsZ polymerization. In Burkholderia lata (strain ATCC 17760 / DSM 23089 / LMG 22485 / NCIMB 9086 / R18194 / 383), this protein is Probable septum site-determining protein MinC.